We begin with the raw amino-acid sequence, 332 residues long: Glycerol-3-phosphate dehydrogenase [NAD(P)+] (332 aa).

Residues tryptophan 11, arginine 30, and lysine 108 each contribute to the NADPH site. The sn-glycerol 3-phosphate site is built by lysine 108, glycine 137, and serine 139. Position 141 (alanine 141) interacts with NADPH. The sn-glycerol 3-phosphate site is built by lysine 192, aspartate 245, serine 255, arginine 256, and asparagine 257. Lysine 192 serves as the catalytic Proton acceptor. Arginine 256 provides a ligand contact to NADPH. NADPH-binding residues include valine 280 and glutamate 282.

The protein belongs to the NAD-dependent glycerol-3-phosphate dehydrogenase family.

The protein resides in the cytoplasm. The enzyme catalyses sn-glycerol 3-phosphate + NAD(+) = dihydroxyacetone phosphate + NADH + H(+). The catalysed reaction is sn-glycerol 3-phosphate + NADP(+) = dihydroxyacetone phosphate + NADPH + H(+). Its pathway is membrane lipid metabolism; glycerophospholipid metabolism. Catalyzes the reduction of the glycolytic intermediate dihydroxyacetone phosphate (DHAP) to sn-glycerol 3-phosphate (G3P), the key precursor for phospholipid synthesis. The sequence is that of Glycerol-3-phosphate dehydrogenase [NAD(P)+] from Paraburkholderia phymatum (strain DSM 17167 / CIP 108236 / LMG 21445 / STM815) (Burkholderia phymatum).